The chain runs to 61 residues: Large ribosomal subunit protein uL30 (61 aa).

It belongs to the universal ribosomal protein uL30 family. Part of the 50S ribosomal subunit.

This chain is Large ribosomal subunit protein uL30, found in Corynebacterium diphtheriae (strain ATCC 700971 / NCTC 13129 / Biotype gravis).